Consider the following 285-residue polypeptide: 4-diphosphocytidyl-2-C-methyl-D-erythritol kinase (285 aa).

The active site involves Lys-12. Residue 95 to 105 (PMGGGVGGGSS) participates in ATP binding. Asp-137 is a catalytic residue.

This sequence belongs to the GHMP kinase family. IspE subfamily.

It catalyses the reaction 4-CDP-2-C-methyl-D-erythritol + ATP = 4-CDP-2-C-methyl-D-erythritol 2-phosphate + ADP + H(+). The protein operates within isoprenoid biosynthesis; isopentenyl diphosphate biosynthesis via DXP pathway; isopentenyl diphosphate from 1-deoxy-D-xylulose 5-phosphate: step 3/6. In terms of biological role, catalyzes the phosphorylation of the position 2 hydroxy group of 4-diphosphocytidyl-2C-methyl-D-erythritol. This is 4-diphosphocytidyl-2-C-methyl-D-erythritol kinase from Actinobacillus pleuropneumoniae serotype 7 (strain AP76).